We begin with the raw amino-acid sequence, 137 residues long: Ribonuclease kappa (137 aa).

2 consecutive transmembrane segments (helical) span residues 52 to 72 (ACGIVLSAWGVIMLIMLGIFF) and 104 to 124 (VSYNCFIAAGLYLLLGGFSFC).

It belongs to the RNase K family. As to quaternary structure, interacts with the proton translocation complex V0 of the V-ATPase. Interacts with ATP6AP1. In terms of tissue distribution, widely expressed.

It is found in the endomembrane system. The protein localises to the cytoplasmic vesicle. Its subcellular location is the clathrin-coated vesicle membrane. In terms of biological role, endoribonuclease which preferentially cleaves ApU and ApG phosphodiester bonds. Hydrolyzes UpU bonds at a lower rate. Regulates the activity of vacuolar (H+)-ATPase (V-ATPase) which is responsible for acidifying and maintaining the pH of intracellular compartments. Required at an early stage of receptor-mediated endocytosis. Its function is as follows. (Microbial infection) Required at an early stage of both clathrin-mediated and clathrin-independent endocytic uptake of a diverse set of viruses, including dengue, West Nile, Sindbis, Rift Valley Fever, influenza, and human rhinoviruses. The polypeptide is Ribonuclease kappa (RNASEK) (Homo sapiens (Human)).